The sequence spans 294 residues: Lycopene elongase/hydratase (294 aa).

The next 8 helical transmembrane spans lie at 31–51, 53–73, 115–135, 160–180, 182–202, 222–242, 243–263, and 274–294; these read FWLY…DGPG, LFSP…NVFL, LALL…LAWM, GLYI…APPA, AVVG…IPDI, TYYY…FTHW, VFGV…GVGV, and AINT…MLYG.

This sequence belongs to the UbiA prenyltransferase family.

It localises to the cell membrane. The catalysed reaction is all-trans-lycopene + dimethylallyl diphosphate + H2O = dihydroisopentenyldehydrorhodopin + diphosphate. The enzyme catalyses isopentenyldehydrorhodopin + dimethylallyl diphosphate + H2O = dihydrobisanhydrobacterioruberin + diphosphate. It participates in carotenoid biosynthesis. Functionally, involved in the biosynthesis of the acyclic C50 carotenoid bacterioruberin (BR). Acts as a bifunctional elongase/hydratase that catalyzes the elongation of lycopene by attaching a C(5) isoprene unit at C-2, as well as the hydroxylation of the previous end of the molecule. The enzyme acts at both ends of the substrate, and catalyzes the conversion of lycopene to the C(45) intermediate dihydroisopentenyldehydrorhodopin (DH-IDR) and the conversion of isopentenyldehydrorhodopin (IDR) to the C(50) carotenoid dihydrobisanhydrobacterioruberin (DH-BABR). Can also catalyze the conversion of lycopene to tetrahydrobisanhydrobacterioruberin (TH-BABR). In Haloarcula japonica (strain ATCC 49778 / DSM 6131 / JCM 7785 / NBRC 101032 / NCIMB 13157 / TR-1), this protein is Lycopene elongase/hydratase.